The sequence spans 258 residues: Small ribosomal subunit protein mS40 (258 aa).

A mitochondrion-targeting transit peptide spans 1 to 35 (MAASVLNVLLRRLPYFSPFRGAYGVQVPLQTLCTK). S49 carries the post-translational modification Phosphoserine. The interval 221 to 258 (QGHLREESGPPPESMPKVPLTAPNEATSTEQAGPQSAL) is disordered. Polar residues predominate over residues 244–258 (NEATSTEQAGPQSAL).

The protein belongs to the bacterial ribosomal protein bS18 family. Mitochondrion-specific ribosomal protein mS40 subfamily. Component of the mitochondrial ribosome small subunit (28S) which comprises a 12S rRNA and about 30 distinct proteins.

Its subcellular location is the mitochondrion. This Bos taurus (Bovine) protein is Small ribosomal subunit protein mS40.